Here is a 252-residue protein sequence, read N- to C-terminus: Chlorophyll a-b binding protein P4, chloroplastic (252 aa).

Position 56 (Trp-56) interacts with chlorophyll b. Residues Phe-76 and Glu-95 each contribute to the chlorophyll a site. Arg-100 is a binding site for chlorophyll b. A run of 2 helical transmembrane segments spans residues Trp-101–Ile-121 and Tyr-134–Ile-154. Residues Ser-137, Val-143, Glu-153, and Arg-156 each coordinate chlorophyll b. 6 residues coordinate chlorophyll a: Lys-203, Glu-204, Asn-207, Arg-209, Gln-221, and His-236.

This sequence belongs to the light-harvesting chlorophyll a/b-binding (LHC) protein family. The LHC complex consists of chlorophyll a-b binding proteins. Binds at least 14 chlorophylls (8 Chl-a and 6 Chl-b) and carotenoids such as lutein and neoxanthin. serves as cofactor. Photoregulated by reversible phosphorylation of its threonine residues.

The protein localises to the plastid. It is found in the chloroplast thylakoid membrane. In terms of biological role, the light-harvesting complex (LHC) functions as a light receptor, it captures and delivers excitation energy to photosystems with which it is closely associated. Functionally, may channel protons produced in the catalytic Mn center of water oxidation into the thylakoid lumen. The sequence is that of Chlorophyll a-b binding protein P4, chloroplastic from Pisum sativum (Garden pea).